The sequence spans 407 residues: Arginine deiminase (407 aa).

Cysteine 397 serves as the catalytic Amidino-cysteine intermediate.

Belongs to the arginine deiminase family.

It is found in the cytoplasm. It carries out the reaction L-arginine + H2O = L-citrulline + NH4(+). It functions in the pathway amino-acid degradation; L-arginine degradation via ADI pathway; carbamoyl phosphate from L-arginine: step 1/2. This chain is Arginine deiminase, found in Escherichia coli O81 (strain ED1a).